The sequence spans 111 residues: Large ribosomal subunit protein uL22 (111 aa).

Belongs to the universal ribosomal protein uL22 family. Part of the 50S ribosomal subunit.

In terms of biological role, this protein binds specifically to 23S rRNA; its binding is stimulated by other ribosomal proteins, e.g. L4, L17, and L20. It is important during the early stages of 50S assembly. It makes multiple contacts with different domains of the 23S rRNA in the assembled 50S subunit and ribosome. Functionally, the globular domain of the protein is located near the polypeptide exit tunnel on the outside of the subunit, while an extended beta-hairpin is found that lines the wall of the exit tunnel in the center of the 70S ribosome. The polypeptide is Large ribosomal subunit protein uL22 (Thermoanaerobacter pseudethanolicus (strain ATCC 33223 / 39E) (Clostridium thermohydrosulfuricum)).